Reading from the N-terminus, the 421-residue chain is Ankyrin repeat domain-containing protein 61 (421 aa).

8 ANK repeats span residues 27-57 (TLHSKLYEAIIKEDCNTIKTLLRNHPVNQPL), 74-103 (QPIFPIHLAAEYRKPQSLLCLLQHGADPEV), 107-146 (QGFTTLHLMLLNWPASSTTWSKPSTQIQKILMDIQNNAVL), 166-195 (NKHSALHLAIIHGTYPVLSFLAQNGAQVNA), 199-228 (SSMTPLHMAADILNKNMIETLIAFGANVNC), 233-272 (TGNTALKLAVCTASSKVGRLLAAGVGCIRLLLNNGAQVNA), 276-305 (EGQTALHEACFGGREAIISLLLEFEANVNI), and 309-342 (NGESPIYMYLQRSSNIRDRSLLARLLYRTYPLRL).

This Mus musculus (Mouse) protein is Ankyrin repeat domain-containing protein 61 (Ankrd61).